Here is a 421-residue protein sequence, read N- to C-terminus: Synaptotagmin-15 (421 aa).

The Extracellular segment spans residues 1–4 (MAEQ). Residues 5-29 (LALVIGGTIGGLLLLLLIGASCCLW) traverse the membrane as a helical; Signal-anchor for type III membrane protein segment. Residues 30–421 (RRFCATLTYE…WHALCRTTEP (392 aa)) are Cytoplasmic-facing. The disordered stretch occupies residues 47–68 (MATTAASSGQRDRPCQPHARTQ). C2 domains lie at 147 to 264 (CLGR…RRVI) and 278 to 399 (EFGD…EHWD).

It belongs to the synaptotagmin family. As to quaternary structure, homodimer.

Its subcellular location is the cell membrane. Its function is as follows. May be involved in the trafficking and exocytosis of secretory vesicles in non-neuronal tissues. In Homo sapiens (Human), this protein is Synaptotagmin-15 (SYT15).